Here is a 446-residue protein sequence, read N- to C-terminus: MSDKRRYFGTDGVRGKVGQYPITPDFVLKLGWAAGRVLAKQGTKKVIIGKDTRISGYMLESALEAGLAAAGLKATFTGPMPTPAVAYLTQTFRAEAGIVISASHNPYYDNGIKFFSSEGTKLPDDIELAIEAELDKEIECVESAELGKATRLNDAAGRYIEFCKSTFPSELSLAKLKIVVDCANGATYHIAPNVFTELGADVIAMGVTPNGTNINHEVGATDVRALQQRVVEEQADLGLAFDGDGDRIIMVDHLGNKVDGDQIAYIIARDALRRGELKGGVVGTLMTNLGMENGLKQLGIPFVRAAVGDRYVMEKLLEKGWKIGAENSGHVILLDKVTTGDAIVAALQVLASVVGSELSLNELSKGMTLYPQVLENVRFAGQGNPLEAEAVKKAVEEVEADLGSKGRVLLRKSGTEPLIRVMVEGEDGELVQNSALKIAQAVKDNC.

Residue Ser103 is the Phosphoserine intermediate of the active site. Residues Ser103, Asp242, Asp244, and Asp246 each contribute to the Mg(2+) site. Residue Ser103 is modified to Phosphoserine.

It belongs to the phosphohexose mutase family. It depends on Mg(2+) as a cofactor. In terms of processing, activated by phosphorylation.

It catalyses the reaction alpha-D-glucosamine 1-phosphate = D-glucosamine 6-phosphate. Catalyzes the conversion of glucosamine-6-phosphate to glucosamine-1-phosphate. The chain is Phosphoglucosamine mutase from Vibrio vulnificus (strain YJ016).